A 348-amino-acid chain; its full sequence is Protein RecA (348 aa).

64 to 71 (GPESSGKT) contributes to the ATP binding site.

This sequence belongs to the RecA family.

It is found in the cytoplasm. Functionally, can catalyze the hydrolysis of ATP in the presence of single-stranded DNA, the ATP-dependent uptake of single-stranded DNA by duplex DNA, and the ATP-dependent hybridization of homologous single-stranded DNAs. It interacts with LexA causing its activation and leading to its autocatalytic cleavage. In Blastochloris viridis (Rhodopseudomonas viridis), this protein is Protein RecA.